The following is a 374-amino-acid chain: Peptide chain release factor 2 (374 aa).

An N5-methylglutamine modification is found at Gln-250.

The protein belongs to the prokaryotic/mitochondrial release factor family. Methylated by PrmC. Methylation increases the termination efficiency of RF2.

Its subcellular location is the cytoplasm. Functionally, peptide chain release factor 2 directs the termination of translation in response to the peptide chain termination codons UGA and UAA. In Roseobacter denitrificans (strain ATCC 33942 / OCh 114) (Erythrobacter sp. (strain OCh 114)), this protein is Peptide chain release factor 2.